Reading from the N-terminus, the 292-residue chain is MKNVVLETNLKGVKLLRRGKVRDIYEIEDYLLIVATDRVSAFDVVLPTGIPEKGKILTQISLFWFDKVKDIVENHLVSANADEFPEPLPAYKEILEGRSMLVKKAKPLPVECIVRGYLSGSGWKDYQKTGMICGIKLPEGLVESAKLPEPVFTPSTKAEQGHDINISFEETIQILGEETAQKVKELSLSIYKKAAQIAEKKGIIIADTKMEFGFYNGKLILIDELLTPDSSRFWSLENYRIGYPQDSYDKQIVRDYLLSIKWDKKPPAPQLPEDIVNKTAERYKEIFRILTS.

Belongs to the SAICAR synthetase family.

It catalyses the reaction 5-amino-1-(5-phospho-D-ribosyl)imidazole-4-carboxylate + L-aspartate + ATP = (2S)-2-[5-amino-1-(5-phospho-beta-D-ribosyl)imidazole-4-carboxamido]succinate + ADP + phosphate + 2 H(+). The protein operates within purine metabolism; IMP biosynthesis via de novo pathway; 5-amino-1-(5-phospho-D-ribosyl)imidazole-4-carboxamide from 5-amino-1-(5-phospho-D-ribosyl)imidazole-4-carboxylate: step 1/2. This is Phosphoribosylaminoimidazole-succinocarboxamide synthase from Thermodesulfovibrio yellowstonii (strain ATCC 51303 / DSM 11347 / YP87).